The chain runs to 723 residues: BBSome complex assembly protein BBS10 (723 aa).

It belongs to the TCP-1 chaperonin family. As to quaternary structure, component of a complex composed at least of MKKS, BBS10, BBS12, TCP1, CCT2, CCT3, CCT4, CCT5 and CCT8.

Its subcellular location is the cell projection. The protein localises to the cilium. Functionally, probable molecular chaperone that assists the folding of proteins upon ATP hydrolysis. Plays a role in the assembly of BBSome, a complex involved in ciliogenesis regulating transports vesicles to the cilia. Involved in adipogenic differentiation. This is BBSome complex assembly protein BBS10 (BBS10) from Homo sapiens (Human).